Reading from the N-terminus, the 85-residue chain is ATP synthase subunit c (85 aa).

The next 2 helical transmembrane spans lie at 10–30 (IAVA…FAVL) and 53–73 (FIIA…ALLF).

This sequence belongs to the ATPase C chain family. F-type ATPases have 2 components, F(1) - the catalytic core - and F(0) - the membrane proton channel. F(1) has five subunits: alpha(3), beta(3), gamma(1), delta(1), epsilon(1). F(0) has three main subunits: a(1), b(2) and c(10-14). The alpha and beta chains form an alternating ring which encloses part of the gamma chain. F(1) is attached to F(0) by a central stalk formed by the gamma and epsilon chains, while a peripheral stalk is formed by the delta and b chains.

Its subcellular location is the cell inner membrane. In terms of biological role, f(1)F(0) ATP synthase produces ATP from ADP in the presence of a proton or sodium gradient. F-type ATPases consist of two structural domains, F(1) containing the extramembraneous catalytic core and F(0) containing the membrane proton channel, linked together by a central stalk and a peripheral stalk. During catalysis, ATP synthesis in the catalytic domain of F(1) is coupled via a rotary mechanism of the central stalk subunits to proton translocation. Its function is as follows. Key component of the F(0) channel; it plays a direct role in translocation across the membrane. A homomeric c-ring of between 10-14 subunits forms the central stalk rotor element with the F(1) delta and epsilon subunits. The polypeptide is ATP synthase subunit c (Vibrio cholerae serotype O1 (strain ATCC 39315 / El Tor Inaba N16961)).